A 173-amino-acid polypeptide reads, in one-letter code: MTYFMLFLGLCFVLGGLAVASNPSPYYGVVGLVLASVVGCGWLLSLGVSFVSLVLFMVYLGGMLVVFVYSVSLAADPFPEAWGDWRVVGYGVSFIVVLAAGAVVGGLAGCWDLGVITVDSVGMFSVRLDFSGVAMFYSCGVGMFLVAGWGLLLTLFVVLELVRGLSCGAIRAV.

5 helical membrane-spanning segments follow: residues 1–21 (MTYF…AVAS), 27–47 (YGVV…LSLG), 48–68 (VSFV…VVFV), 87–107 (VVGY…VGGL), and 139–159 (CGVG…FVVL).

This sequence belongs to the complex I subunit 6 family.

The protein localises to the mitochondrion membrane. It carries out the reaction a ubiquinone + NADH + 5 H(+)(in) = a ubiquinol + NAD(+) + 4 H(+)(out). Functionally, core subunit of the mitochondrial membrane respiratory chain NADH dehydrogenase (Complex I) that is believed to belong to the minimal assembly required for catalysis. Complex I functions in the transfer of electrons from NADH to the respiratory chain. The immediate electron acceptor for the enzyme is believed to be ubiquinone. This Synthliboramphus wumizusume (Japanese murrelet) protein is NADH-ubiquinone oxidoreductase chain 6 (MT-ND6).